The following is a 397-amino-acid chain: Acetate kinase (397 aa).

N7 lines the Mg(2+) pocket. An ATP-binding site is contributed by K14. A substrate-binding site is contributed by R90. The active-site Proton donor/acceptor is the D147. Residues 207–211 (HLGNG), 282–284 (DFR), and 330–334 (GLGEN) contribute to the ATP site. Residue E383 coordinates Mg(2+).

This sequence belongs to the acetokinase family. In terms of assembly, homodimer. Mg(2+) serves as cofactor. Requires Mn(2+) as cofactor.

Its subcellular location is the cytoplasm. The enzyme catalyses acetate + ATP = acetyl phosphate + ADP. It participates in metabolic intermediate biosynthesis; acetyl-CoA biosynthesis; acetyl-CoA from acetate: step 1/2. Its function is as follows. Catalyzes the formation of acetyl phosphate from acetate and ATP. Can also catalyze the reverse reaction. The sequence is that of Acetate kinase from Clostridium botulinum (strain ATCC 19397 / Type A).